The primary structure comprises 140 residues: Sec-independent protein translocase protein TatB (140 aa).

The helical transmembrane segment at 1–21 (MFDIGFSELLLIAVVALVVLG) threads the bilayer. The interval 119-140 (VHVTSPPPSTSTHGNNGQEKSQ) is disordered. Over residues 128–140 (TSTHGNNGQEKSQ) the composition is skewed to polar residues.

This sequence belongs to the TatB family. In terms of assembly, the Tat system comprises two distinct complexes: a TatABC complex, containing multiple copies of TatA, TatB and TatC subunits, and a separate TatA complex, containing only TatA subunits. Substrates initially bind to the TatABC complex, which probably triggers association of the separate TatA complex to form the active translocon.

It localises to the cell inner membrane. Part of the twin-arginine translocation (Tat) system that transports large folded proteins containing a characteristic twin-arginine motif in their signal peptide across membranes. Together with TatC, TatB is part of a receptor directly interacting with Tat signal peptides. TatB may form an oligomeric binding site that transiently accommodates folded Tat precursor proteins before their translocation. This chain is Sec-independent protein translocase protein TatB, found in Xylella fastidiosa (strain 9a5c).